An 85-amino-acid chain; its full sequence is Elongation factor 1-beta (85 aa).

This sequence belongs to the EF-1-beta/EF-1-delta family.

Promotes the exchange of GDP for GTP in EF-1-alpha/GDP, thus allowing the regeneration of EF-1-alpha/GTP that could then be used to form the ternary complex EF-1-alpha/GTP/AAtRNA. This is Elongation factor 1-beta from Methanoregula boonei (strain DSM 21154 / JCM 14090 / 6A8).